We begin with the raw amino-acid sequence, 510 residues long: NAD(P)H-quinone oxidoreductase subunit 2 A, chloroplastic (510 aa).

13 helical membrane-spanning segments follow: residues 24 to 44 (LLLFDGSLIFPECILIFGLIL), 57 to 77 (IPWLYFISSTSLVMSITALLF), 99 to 119 (IFQFLILLCSTLCIPLSVEYI), 124 to 144 (MAITEFLLFVLTATLGGMFLC), 149 to 169 (LITIFVAPECFSLCSYLLSGY), 183 to 203 (YLLMGGASSSILVHGFSWLYG), 227 to 247 (PGISIALIFITVGIGFKLSPA), 295 to 315 (WHLLLEILAILSMILGNLIAI), 323 to 343 (MLAYSSIGQIGYVIIGIIVGD), 354 to 374 (YMLFYISMNLGTFACIVLFGL), 395 to 415 (ALSLALCLLSLGGLPPLAGFF), 418 to 438 (LYLFWCGWQAGLYFLVLIGLL), and 484 to 504 (MIVCVIASTIPGISMNPIIAI).

This sequence belongs to the complex I subunit 2 family. In terms of assembly, NDH is composed of at least 16 different subunits, 5 of which are encoded in the nucleus.

It is found in the plastid. The protein localises to the chloroplast thylakoid membrane. The catalysed reaction is a plastoquinone + NADH + (n+1) H(+)(in) = a plastoquinol + NAD(+) + n H(+)(out). It carries out the reaction a plastoquinone + NADPH + (n+1) H(+)(in) = a plastoquinol + NADP(+) + n H(+)(out). Its function is as follows. NDH shuttles electrons from NAD(P)H:plastoquinone, via FMN and iron-sulfur (Fe-S) centers, to quinones in the photosynthetic chain and possibly in a chloroplast respiratory chain. The immediate electron acceptor for the enzyme in this species is believed to be plastoquinone. Couples the redox reaction to proton translocation, and thus conserves the redox energy in a proton gradient. In Panax ginseng (Korean ginseng), this protein is NAD(P)H-quinone oxidoreductase subunit 2 A, chloroplastic.